A 101-amino-acid chain; its full sequence is opdI (101 aa).

The helical transmembrane segment at 30–49 (GGMGGALKIVFLGMMTYFIA) threads the bilayer. The disordered stretch occupies residues 56 to 101 (SQHPPTDFNAPVQSVPQRAQRPSDTRLQGPVLLASNHPSGDSASPE). Composition is skewed to polar residues over residues 66–81 (PVQSVPQRAQRPSDTR) and 91–101 (NHPSGDSASPE).

It is found in the membrane. Functionally, part of the gene cluster that mediates the biosynthesis of oxopyrrolidines, polyketide-amino acid hybrid compounds with feature structures of tetramic acid. Does not seem to play a role in oxopyrrolidines A and B biosynthesis. This Penicillium oxalicum (strain 114-2 / CGMCC 5302) (Penicillium decumbens) protein is opdI.